Reading from the N-terminus, the 445-residue chain is 2-oxoisovalerate dehydrogenase subunit alpha, mitochondrial (445 aa).

The N-terminal 45 residues, 1-45, are a transit peptide targeting the mitochondrion; it reads MAVAIAAARVWRLNRGLSQAALLLLRQPGARGLARSHPPRQQQQF. The tract at residues 33–52 is disordered; the sequence is LARSHPPRQQQQFSSLDDKP. Positions 158 and 159 each coordinate thiamine diphosphate. Residue serine 206 participates in K(+) binding. Serine 207 is a binding site for thiamine diphosphate. Positions 208, 211, and 212 each coordinate K(+). Glutamate 238 provides a ligand contact to Mg(2+). The thiamine diphosphate site is built by glycine 239, alanine 240, and arginine 265. Residues asparagine 267 and tyrosine 269 each contribute to the Mg(2+) site. Residue histidine 336 coordinates thiamine diphosphate. Serine 337 bears the Phosphoserine; by BCKDK mark. The residue at position 338 (threonine 338) is a Phosphothreonine. Phosphoserine is present on residues serine 339 and serine 347. The residue at position 356 (lysine 356) is an N6-acetyllysine; alternate. At lysine 356 the chain carries N6-succinyllysine; alternate. Lysine 380 is subject to N6-succinyllysine.

Belongs to the BCKDHA family. In terms of assembly, heterotetramer of 2 alpha/BCKDHA and 2 beta chains/BCKDHB that forms the branched-chain alpha-keto acid decarboxylase (E1) component of the BCKD complex. The branched-chain alpha-ketoacid dehydrogenase is a large complex composed of three major building blocks E1, E2 and E3. It is organized around E2, a 24-meric cubic core composed of DBT, to which are associated 6 to 12 copies of E1, and approximately 6 copies of the dehydrogenase E3, a DLD dimer. Interacts with PPM1K. Requires thiamine diphosphate as cofactor. Mg(2+) is required as a cofactor. Phosphorylated at Ser-337 by BCKDK and dephosphorylated by protein phosphatase PPM1K.

The protein localises to the mitochondrion matrix. It carries out the reaction N(6)-[(R)-lipoyl]-L-lysyl-[protein] + 3-methyl-2-oxobutanoate + H(+) = N(6)-[(R)-S(8)-2-methylpropanoyldihydrolipoyl]-L-lysyl-[protein] + CO2. Its function is as follows. Together with BCKDHB forms the heterotetrameric E1 subunit of the mitochondrial branched-chain alpha-ketoacid dehydrogenase (BCKD) complex. The BCKD complex catalyzes the multi-step oxidative decarboxylation of alpha-ketoacids derived from the branched-chain amino-acids valine, leucine and isoleucine producing CO2 and acyl-CoA which is subsequently utilized to produce energy. The E1 subunit catalyzes the first step with the decarboxylation of the alpha-ketoacid forming an enzyme-product intermediate. A reductive acylation mediated by the lipoylamide cofactor of E2 extracts the acyl group from the E1 active site for the next step of the reaction. The protein is 2-oxoisovalerate dehydrogenase subunit alpha, mitochondrial of Homo sapiens (Human).